Reading from the N-terminus, the 284-residue chain is 2-dehydro-3-deoxyphosphooctonate aldolase (284 aa).

The protein belongs to the KdsA family.

Its subcellular location is the cytoplasm. It carries out the reaction D-arabinose 5-phosphate + phosphoenolpyruvate + H2O = 3-deoxy-alpha-D-manno-2-octulosonate-8-phosphate + phosphate. It functions in the pathway carbohydrate biosynthesis; 3-deoxy-D-manno-octulosonate biosynthesis; 3-deoxy-D-manno-octulosonate from D-ribulose 5-phosphate: step 2/3. The protein operates within bacterial outer membrane biogenesis; lipopolysaccharide biosynthesis. The chain is 2-dehydro-3-deoxyphosphooctonate aldolase from Salmonella arizonae (strain ATCC BAA-731 / CDC346-86 / RSK2980).